The primary structure comprises 389 residues: Large ribosomal subunit protein uL3 (389 aa).

Positions 1–36 (MSHRKFEHPRHGSLGFLPRKRSSRHRGKVKSFPKDD) are disordered. Residues 18–31 (PRKRSSRHRGKVKS) show a composition bias toward basic residues.

Belongs to the universal ribosomal protein uL3 family.

The protein localises to the cytoplasm. In terms of biological role, the L3 protein is a component of the large subunit of cytoplasmic ribosomes. The chain is Large ribosomal subunit protein uL3 (RPL3) from Oryza sativa subsp. japonica (Rice).